The sequence spans 41 residues: Photosystem I reaction center subunit IX (41 aa).

The chain crosses the membrane as a helical span at residues 7-27 (YLSTAPVVALIWFTFTAGLLI).

It belongs to the PsaJ family.

It is found in the plastid. It localises to the chloroplast thylakoid membrane. In terms of biological role, may help in the organization of the PsaE and PsaF subunits. The polypeptide is Photosystem I reaction center subunit IX (Pleurastrum terricola (Filamentous green alga)).